Reading from the N-terminus, the 640-residue chain is Threonine--tRNA ligase (640 aa).

In terms of domain architecture, TGS spans M1–T61. The tract at residues D242 to P533 is catalytic. C333, H384, and H510 together coordinate Zn(2+).

This sequence belongs to the class-II aminoacyl-tRNA synthetase family. As to quaternary structure, homodimer. It depends on Zn(2+) as a cofactor.

Its subcellular location is the cytoplasm. The catalysed reaction is tRNA(Thr) + L-threonine + ATP = L-threonyl-tRNA(Thr) + AMP + diphosphate + H(+). Its function is as follows. Catalyzes the attachment of threonine to tRNA(Thr) in a two-step reaction: L-threonine is first activated by ATP to form Thr-AMP and then transferred to the acceptor end of tRNA(Thr). Also edits incorrectly charged L-seryl-tRNA(Thr). The polypeptide is Threonine--tRNA ligase (Pseudomonas fluorescens (strain Pf0-1)).